The chain runs to 21 residues: Ocellatin-3 (21 aa).

Residue I21 is modified to Isoleucine amide.

As to expression, expressed by the skin dorsal glands.

It localises to the secreted. Its function is as follows. Has hemolytic activity against human erythrocytes and antibacterial activity against the Gram-negative bacterium E.coli. The protein is Ocellatin-3 of Leptodactylus ocellatus (Argus frog).